Here is a 426-residue protein sequence, read N- to C-terminus: Putative nickel insertion protein (426 aa).

Belongs to the LarC family.

The sequence is that of Putative nickel insertion protein from Nostoc sp. (strain PCC 7120 / SAG 25.82 / UTEX 2576).